The following is a 427-amino-acid chain: ATP-dependent RNA helicase DDX39A (427 aa).

Acidic residues predominate over residues 1 to 19 (MAEQDVENELLDYDEDEEP). The segment at 1–35 (MAEQDVENELLDYDEDEEPQVPQESTPAPPKKDVK) is disordered. Position 2 is an N-acetylalanine (A2). A Glycyl lysine isopeptide (Lys-Gly) (interchain with G-Cter in SUMO2) cross-link involves residue K31. At K35 the chain carries N6-acetyllysine; alternate. K35 is covalently cross-linked (Glycyl lysine isopeptide (Lys-Gly) (interchain with G-Cter in SUMO2); alternate). S37 carries the post-translational modification Phosphoserine. Residues 44–72 (SGFRDFLLKPELLRAIVDCGFEHPSEVQH) carry the Q motif motif. The region spanning 75-248 (IPQAILGMDV…RKFMQDPMEV (174 aa)) is the Helicase ATP-binding domain. 88-95 (AKSGMGKT) is an ATP binding site. Glycyl lysine isopeptide (Lys-Gly) (interchain with G-Cter in SUMO2) cross-links involve residues K154 and K162. The residue at position 171 (T171) is a Phosphothreonine. Residues 195–198 (DECD) carry the DECD box motif. Residues K240 and K255 each participate in a glycyl lysine isopeptide (Lys-Gly) (interchain with G-Cter in SUMO2) cross-link. The Helicase C-terminal domain occupies 260 to 421 (GLQQYYVKLK…ELPEEIDIST (162 aa)). Phosphoserine is present on S426.

The protein belongs to the DEAD box helicase family. DECD subfamily. Binds ALYREF/THOC4 and DDX39B/BAT1. Interacts with the apo-AREX complex component SARNP. Interacts with MX1. Interacts with MCM3AP isoform GANP. Interacts with ECD. Interacts with PHAX; this interaction stimulates PHAX RNA binding activity. In terms of processing, SUMOylated by RANBP2; SUMOylation modification affects its ability to bind RNA.

The protein resides in the nucleus. It localises to the cytoplasm. The enzyme catalyses ATP + H2O = ADP + phosphate + H(+). In terms of biological role, helicase that plays an essential role in mRNA export and is involved in multiple steps in RNA metabolism including alternative splicing. Regulates nuclear mRNA export to the cytoplasm through association with ECD. Also involved in spliceosomal uridine-rich small nuclear RNA (U snRNA) export by stimulating the RNA binding of adapter PHAX. Plays a role in the negative regulation of type I IFN production by increasing the nuclear retention of antiviral transcripts and thus reducing their protein expression. Independently of the interferon pathway, plays an antiviral role against alphaviruses by binding to a 5' conserved sequence element in the viral genomic RNA. This Rattus norvegicus (Rat) protein is ATP-dependent RNA helicase DDX39A (Ddx39a).